The chain runs to 191 residues: Inosine triphosphate pyrophosphatase (191 aa).

Residue 12 to 17 (TGNKNK) coordinates ITP. Glu-40 provides a ligand contact to Mg(2+). Residues Lys-52, 68-69 (DS), Lys-85, 144-147 (FGWE), Lys-167, and 172-173 (HR) contribute to the ITP site.

This sequence belongs to the HAM1 NTPase family. As to quaternary structure, homodimer. Mg(2+) serves as cofactor. It depends on Mn(2+) as a cofactor.

The protein resides in the cytoplasm. Its subcellular location is the nucleus. The enzyme catalyses ITP + H2O = IMP + diphosphate + H(+). The catalysed reaction is dITP + H2O = dIMP + diphosphate + H(+). It catalyses the reaction XTP + H2O = XMP + diphosphate + H(+). Its function is as follows. Pyrophosphatase that hydrolyzes non-canonical purine nucleotides such as inosine triphosphate (ITP), deoxyinosine triphosphate (dITP) or xanthosine 5'-triphosphate (XTP) to their respective monophosphate derivatives. The enzyme does not distinguish between the deoxy- and ribose forms. Probably excludes non-canonical purines from RNA and DNA precursor pools, thus preventing their incorporation into RNA and DNA and avoiding chromosomal lesions. This chain is Inosine triphosphate pyrophosphatase, found in Aspergillus oryzae (strain ATCC 42149 / RIB 40) (Yellow koji mold).